A 246-amino-acid chain; its full sequence is 2-C-methyl-D-erythritol 4-phosphate cytidylyltransferase (246 aa).

The protein belongs to the IspD/TarI cytidylyltransferase family. IspD subfamily.

It carries out the reaction 2-C-methyl-D-erythritol 4-phosphate + CTP + H(+) = 4-CDP-2-C-methyl-D-erythritol + diphosphate. Its pathway is isoprenoid biosynthesis; isopentenyl diphosphate biosynthesis via DXP pathway; isopentenyl diphosphate from 1-deoxy-D-xylulose 5-phosphate: step 2/6. Its function is as follows. Catalyzes the formation of 4-diphosphocytidyl-2-C-methyl-D-erythritol from CTP and 2-C-methyl-D-erythritol 4-phosphate (MEP). The polypeptide is 2-C-methyl-D-erythritol 4-phosphate cytidylyltransferase (Clostridium tetani (strain Massachusetts / E88)).